The chain runs to 102 residues: Cytochrome b (102 aa).

The next 3 membrane-spanning stretches (helical) occupy residues 1 to 21 (FGSL…FLAM), 45 to 66 (WLIR…YLHI), and 81 to 101 (WNIG…GYVL). Heme b contacts are provided by H51 and H65.

The protein belongs to the cytochrome b family. In terms of assembly, the cytochrome bc1 complex contains 3 respiratory subunits (MT-CYB, CYC1 and UQCRFS1), 2 core proteins (UQCRC1 and UQCRC2) and probably 6 low-molecular weight proteins. Heme b is required as a cofactor.

The protein resides in the mitochondrion inner membrane. Functionally, component of the ubiquinol-cytochrome c reductase complex (complex III or cytochrome b-c1 complex) that is part of the mitochondrial respiratory chain. The b-c1 complex mediates electron transfer from ubiquinol to cytochrome c. Contributes to the generation of a proton gradient across the mitochondrial membrane that is then used for ATP synthesis. This is Cytochrome b (mt-cyb) from Megalops atlanticus (Tarpon).